The chain runs to 397 residues: Acetate kinase (397 aa).

Asn8 provides a ligand contact to Mg(2+). Lys15 is a binding site for ATP. Arg89 serves as a coordination point for substrate. Residue Asp146 is the Proton donor/acceptor of the active site. ATP-binding positions include 206–210 (HLGNG), 281–283 (DLR), and 329–333 (GIGEN). A Mg(2+)-binding site is contributed by Glu382.

This sequence belongs to the acetokinase family. In terms of assembly, homodimer. Mg(2+) serves as cofactor. The cofactor is Mn(2+).

It is found in the cytoplasm. The catalysed reaction is acetate + ATP = acetyl phosphate + ADP. The protein operates within metabolic intermediate biosynthesis; acetyl-CoA biosynthesis; acetyl-CoA from acetate: step 1/2. In terms of biological role, catalyzes the formation of acetyl phosphate from acetate and ATP. Can also catalyze the reverse reaction. In Geobacillus sp. (strain WCH70), this protein is Acetate kinase.